The chain runs to 75 residues: UPF0352 protein YejL (75 aa).

Belongs to the UPF0352 family.

This Shigella dysenteriae serotype 1 (strain Sd197) protein is UPF0352 protein YejL.